The chain runs to 103 residues: Large ribosomal subunit protein bL21 (103 aa).

It belongs to the bacterial ribosomal protein bL21 family. As to quaternary structure, part of the 50S ribosomal subunit. Contacts protein L20.

In terms of biological role, this protein binds to 23S rRNA in the presence of protein L20. The protein is Large ribosomal subunit protein bL21 of Methylibium petroleiphilum (strain ATCC BAA-1232 / LMG 22953 / PM1).